Reading from the N-terminus, the 399-residue chain is Multi-drug resistance efflux pump PmrA (399 aa).

The next 10 helical transmembrane spans lie at 12 to 34, 49 to 71, 84 to 106, 140 to 162, 167 to 186, 217 to 239, 248 to 270, 306 to 328, 340 to 362, and 366 to 388; these read IAWF…MPIF, AGLA…GILA, GLAM…LIFL, LSTG…AELF, VFLL…ICFI, LFLT…ALYV, LLFV…AGVM, LGLY…NALL, VFAF…GSAV, and FGYH…FNLI.

This sequence belongs to the major facilitator superfamily. TCR/Tet family.

Its subcellular location is the cell membrane. Efflux pump for various substrates. The chain is Multi-drug resistance efflux pump PmrA (pmrA) from Streptococcus pneumoniae serotype 4 (strain ATCC BAA-334 / TIGR4).